The sequence spans 294 residues: uncharacterized protein (294 aa).

It belongs to the glycosyltransferase 2 family.

This is an uncharacterized protein from Haemophilus influenzae (strain ATCC 51907 / DSM 11121 / KW20 / Rd).